Reading from the N-terminus, the 1056-residue chain is Kinesin-like protein KIF11 (1056 aa).

The Kinesin motor domain occupies 18–359 (NIQVVVRCRP…LEYAHRAKNI (342 aa)). 105–112 (GQTGTGKT) contacts ATP. Lys146 carries the post-translational modification N6-acetyllysine. 2 coiled-coil regions span residues 364-480 (EVNQ…KEEY) and 736-763 (LEEK…DIVN). Thr458 bears the Phosphothreonine mark. A Glycyl lysine isopeptide (Lys-Gly) (interchain with G-Cter in SUMO2) cross-link involves residue Lys477. Thr925 is subject to Phosphothreonine. Thr926 carries the phosphothreonine; by CDK1 modification. Ser1033 bears the Phosphoserine; by NEK6 mark. A Glycyl lysine isopeptide (Lys-Gly) (interchain with G-Cter in ubiquitin) cross-link involves residue Lys1034.

The protein belongs to the TRAFAC class myosin-kinesin ATPase superfamily. Kinesin family. BimC subfamily. As to quaternary structure, interacts with the thyroid hormone receptor in the presence of thyroid hormone. Component of a large chromatin remodeling complex, at least composed of MYSM1, PCAF, RBM10 and KIF11/TRIP5. Interacts (via C-terminus) with the kinase NEK6 in both interphase and mitosis. Interacts with RARRES1 and AGBL2. Interacts with TPX2. In terms of processing, phosphorylated exclusively on serine during S phase, but on both serine and Thr-926 during mitosis, so controlling the association of KIF11 with the spindle apparatus (probably during early prophase). Post-translationally, a subset of this protein primarily localized at the spindle pole is phosphorylated by NEK6 during mitosis; phosphorylation is required for mitotic function. Ubiquitinated at Lys-1034 by UHRF1 via 'Lys-63'-linked ubiquitin chains, leading to interaction with spindle assembly factor TPX2, thereby ensuring accurate distribution to the spindles during metaphase.

Its subcellular location is the cytoplasm. The protein localises to the cytoskeleton. The protein resides in the spindle pole. Its function is as follows. Motor protein required for establishing a bipolar spindle and thus contributing to chromosome congression during mitosis. Required in non-mitotic cells for transport of secretory proteins from the Golgi complex to the cell surface. In Homo sapiens (Human), this protein is Kinesin-like protein KIF11 (KIF11).